We begin with the raw amino-acid sequence, 51 residues long: Insulin (51 aa).

Cystine bridges form between Cys7-Cys37, Cys19-Cys50, and Cys36-Cys41.

Belongs to the insulin family. Heterodimer of a B chain and an A chain linked by two disulfide bonds.

The protein resides in the secreted. Its function is as follows. Insulin decreases blood glucose concentration. It increases cell permeability to monosaccharides, amino acids and fatty acids. It accelerates glycolysis, the pentose phosphate cycle, and glycogen synthesis in liver. This Balaenoptera borealis (Sei whale) protein is Insulin (INS).